Reading from the N-terminus, the 563-residue chain is MNHNRLIAKEIAAIVPALEQETILNLLEKPKKSSMGDLAFPTFSLAKTMRKAPQIIASELVGQINNSYFEKVEAVGPYINFFLNKSEISAQVLKEVIKKREDYAQAAIGQGHNIVIDLSSPNIAKPFSIGHLRSTVIGDALSNIFQKLGYETVKINHLGDWGKQFGMLIVAYKKWGSEEAVRAHPIDELLKIYVRINAETKNHPELDEEAREWFRKLENNDEEALALWQWFRDESLMEFNRLYAELGIDFDSYNGEAFYNDKMEEVVQLLAEKGLLEESKGAQVVNLEKYGIEHPALIKKSDGATLYITRDLAAAIYRKRTYDFAKAIYVVGQEQTAHFKQLKAVLAEMGYAWSKDIQHVSFGLVTKNGQKLSTRKGNVILLEPTIAEAVKRSLAQIDTKNPDLVNKEAVAHAVGVGAIKFYDLKTDRTNGYDFDLEAMVSFEGETGPYVQYAHARIQSILRKADFQPQATENYQLNDTESWEIIKLIQDFPNTIVRAADNFEPSLIARFAIHLAQSFNKYYAHTRILDNSPERDSRLALSYATATVLKEALALLGVEAPNEM.

The short motif at 121–131 is the 'HIGH' region element; sequence PNIAKPFSIGH.

This sequence belongs to the class-I aminoacyl-tRNA synthetase family. In terms of assembly, monomer.

It localises to the cytoplasm. The enzyme catalyses tRNA(Arg) + L-arginine + ATP = L-arginyl-tRNA(Arg) + AMP + diphosphate. This chain is Arginine--tRNA ligase, found in Streptococcus mutans serotype c (strain ATCC 700610 / UA159).